We begin with the raw amino-acid sequence, 37 residues long: Dolichyl-diphosphooligosaccharide--protein glycosyltransferase subunit 4A (37 aa).

At 1–7 the chain is on the lumenal side; that stretch reads MIDDQDL. A helical membrane pass occupies residues 8–28; sequence GFIANFLGIFIFALVIAYHYV. Residues 29 to 37 are Cytoplasmic-facing; it reads TADPKYEAT.

The protein belongs to the OST4 family. In terms of assembly, component of the oligosaccharyltransferase (OST) complex.

Its subcellular location is the endoplasmic reticulum membrane. Subunit of the oligosaccharyl transferase (OST) complex that catalyzes the initial transfer of a defined glycan (Glc(3)Man(9)GlcNAc(2) in eukaryotes) from the lipid carrier dolichol-pyrophosphate to an asparagine residue within an Asn-X-Ser/Thr consensus motif in nascent polypeptide chains, the first step in protein N-glycosylation. N-glycosylation occurs cotranslationally and the complex associates with the Sec61 complex at the channel-forming translocon complex that mediates protein translocation across the endoplasmic reticulum (ER). All subunits are required for a maximal enzyme activity. This chain is Dolichyl-diphosphooligosaccharide--protein glycosyltransferase subunit 4A (OST4A), found in Arabidopsis thaliana (Mouse-ear cress).